Here is a 542-residue protein sequence, read N- to C-terminus: MESQKQEDNEYIFRSLYPSVPIPDKLTLPEFVLQGVEEYTENVAFVEAVTGKAVTYGDVVRDTKRLAKALTSLGLRKGQVMVVVLPNVAEYGIIALGIMSAGGVFSGANPTALVSEIKKQVEASGARGIITDATNYEKVKSLGLPVIVLGEEKIEGAVNWKDLLEAGDKCGDTDNEEILQTDLCALPFSSGTTGLQKGVMLTHRNLIANLCSTLFGVRSEMIGQIVTLGLIPFFHIYGIVGICCATMKNKGKVVAMSRYDLRIFLNALIAHEVSFAPIVPPIILNLVKNPIVDEFDLSKLKLQSVMTAAAPLAPELLTAFEAKFPNVQVQEAYGLTEHSCITLTHGDPEKGQGIAKRNSVGFILPNLEVKFIDPDTGRSLPKNTSGELCVRSQCVMQGYFMNKEETDKTIDEQGWLHTGDIGYIDDDGDIFIVDRIKELIKYKGFQVAPAELEAILLTHPSVEDVAVVPLPDEEAGEIPAACVVINPKATEKEEDILNFVAANVAHYKKVRAVHFVDSIPKSLSGKIMRRLLRDKILSINKK.

Positions 189, 190, 191, 192, 193, and 197 each coordinate ATP. A (E)-4-coumaroyl-AMP-binding site is contributed by tyrosine 237. Residue arginine 258 participates in CoA binding. The SBD1 stretch occupies residues 260–331; sequence DLRIFLNALI…AKFPNVQVQE (72 aa). The (E)-4-coumaroyl-AMP site is built by alanine 309, glutamate 331, alanine 332, and threonine 336. Residues glutamate 331, alanine 332, threonine 336, aspartate 420, and arginine 435 each contribute to the ATP site. Residues 332-399 are SBD2; sequence AYGLTEHSCI…VRSQCVMQGY (68 aa). Positions 437 and 441 each coordinate (E)-4-coumaroyl-AMP. CoA is bound by residues lysine 443 and glycine 444. Residue lysine 526 coordinates ATP.

It belongs to the ATP-dependent AMP-binding enzyme family. As to quaternary structure, interacts with TKPR1, PKSA and PKSB. The cofactor is Mg(2+). In terms of tissue distribution, mostly confined to anther tapetal cells.

The protein localises to the endoplasmic reticulum. The catalysed reaction is (E)-4-coumarate + ATP + CoA = (E)-4-coumaroyl-CoA + AMP + diphosphate. It carries out the reaction (E)-4-coumarate + ATP + H(+) = (E)-4-coumaroyl-AMP + diphosphate. It catalyses the reaction (E)-4-coumaroyl-AMP + CoA = (E)-4-coumaroyl-CoA + AMP + H(+). Its function is as follows. Carboxylate--CoA ligase that may use 4-coumarate as substrate. Follows a two-step reaction mechanism, wherein the carboxylate substrate first undergoes adenylation by ATP, followed by a thioesterification in the presence of CoA to yield the final CoA thioester. The sequence is that of 4-coumarate--CoA ligase-like 1 from Arabidopsis thaliana (Mouse-ear cress).